The following is a 429-amino-acid chain: Keratin, type I cytoskeletal 47 kDa (429 aa).

Over residues 1–16 the composition is skewed to low complexity; sequence MTSYRSSSASYYSGSS. Positions 1–20 are disordered; it reads MTSYRSSSASYYSGSSSKGG. Residues 1–69 are head; the sequence is MTSYRSSSAS…EAASSSFGGN (69 aa). Residues 70 to 105 form a coil 1A region; it reads EKHAMQNLNDRLASYLEKVRALEATNSDLEGKIRNW. An IF rod domain is found at 70–385; the sequence is EKHAMQNLND…RLLEGELGQV (316 aa). The interval 106-127 is linker 1; it reads YDKQSDAGIGAGSKDYSKYFEI. Positions 128–219 are coil 1B; the sequence is IAELRNKIRA…KNHEEEMSHA (92 aa). The linker 12 stretch occupies residues 220–242; the sequence is KSQSAGKVSVEMDAALGVDLTSI. A coil 2 region spans residues 243–381; that stretch reads LNNMRADYEI…QTYRRLLEGE (139 aa). Residues 382–429 are tail; sequence LGQVTTVANTSSVESKTESSSTSTTRTRMVKTIVEEVVDGKVVSSRVE. The segment at 389–408 is disordered; it reads ANTSSVESKTESSSTSTTRT. Residues 391–408 are compositionally biased toward low complexity; it reads TSSVESKTESSSTSTTRT.

Belongs to the intermediate filament family. Heterotetramer of two type I and two type II keratins.

The protein is Keratin, type I cytoskeletal 47 kDa (xk81a1) of Xenopus laevis (African clawed frog).